Reading from the N-terminus, the 444-residue chain is Adenylyltransferase and sulfurtransferase UBA4 (444 aa).

ATP contacts are provided by residues G81, D102, 109-113 (SNLHR), K126, and 170-171 (DT). 2 residues coordinate Zn(2+): C212 and C215. Residue C229 is the Glycyl thioester intermediate; for adenylyltransferase activity of the active site. Residues C290 and C293 each coordinate Zn(2+). Residues 343–442 (KTKPYVLLDV…YIDEINPSLP (100 aa)) form the Rhodanese domain. Catalysis depends on C401, which acts as the Cysteine persulfide intermediate; for sulfurtransferase activity.

In the N-terminal section; belongs to the HesA/MoeB/ThiF family. UBA4 subfamily. Zn(2+) serves as cofactor.

It is found in the cytoplasm. Its subcellular location is the cytosol. It functions in the pathway tRNA modification; 5-methoxycarbonylmethyl-2-thiouridine-tRNA biosynthesis. Its function is as follows. Plays a central role in 2-thiolation of mcm(5)S(2)U at tRNA wobble positions of cytosolic tRNA(Lys), tRNA(Glu) and tRNA(Gln). Acts by mediating the C-terminal thiocarboxylation of sulfur carrier URM1. Its N-terminus first activates URM1 as acyl-adenylate (-COAMP), then the persulfide sulfur on the catalytic cysteine is transferred to URM1 to form thiocarboxylation (-COSH) of its C-terminus. The reaction probably involves hydrogen sulfide that is generated from the persulfide intermediate and that acts as a nucleophile towards URM1. Subsequently, a transient disulfide bond is formed. Does not use thiosulfate as sulfur donor; NFS1 probably acting as a sulfur donor for thiocarboxylation reactions. Prior mcm(5) tRNA modification by the elongator complex is required for 2-thiolation. May also be involved in protein urmylation. The protein is Adenylyltransferase and sulfurtransferase UBA4 of Kluyveromyces lactis (strain ATCC 8585 / CBS 2359 / DSM 70799 / NBRC 1267 / NRRL Y-1140 / WM37) (Yeast).